A 284-amino-acid chain; its full sequence is Flavin-dependent thymidylate synthase (284 aa).

One can recognise a ThyX domain in the interval 27-237 (GFIRVVDYMG…PLAYNAFVEY (211 aa)). FAD is bound by residues Thr-73, 96–98 (RHR), and Glu-104. DUMP contacts are provided by residues 93–96 (QWIR) and 104–108 (EYSAR). Positions 96–106 (RHRTANVNEYS) match the ThyX motif motif. Positions 122–142 (EQVAKQSDNNKQGSGEAFDPD) are disordered. Residues 125 to 134 (AKQSDNNKQG) show a composition bias toward polar residues. Arg-176 contributes to the dUMP binding site. Residues 192 to 194 (DLH) and His-198 each bind FAD. Arg-203 provides a ligand contact to dUMP. Arg-203 acts as the Involved in ionization of N3 of dUMP, leading to its activation in catalysis.

Belongs to the thymidylate synthase ThyX family. In terms of assembly, homotetramer. Requires FAD as cofactor.

The catalysed reaction is dUMP + (6R)-5,10-methylene-5,6,7,8-tetrahydrofolate + NADPH + H(+) = dTMP + (6S)-5,6,7,8-tetrahydrofolate + NADP(+). It functions in the pathway pyrimidine metabolism; dTTP biosynthesis. In terms of biological role, catalyzes the reductive methylation of 2'-deoxyuridine-5'-monophosphate (dUMP) to 2'-deoxythymidine-5'-monophosphate (dTMP) while utilizing 5,10-methylenetetrahydrofolate (mTHF) as the methyl donor, and NADPH and FADH(2) as the reductant. This Wolbachia pipientis wMel protein is Flavin-dependent thymidylate synthase.